A 639-amino-acid chain; its full sequence is Sec1 family domain-containing protein 1 (639 aa).

A phosphoserine mark is found at S34, S300, and S525.

Belongs to the STXBP/unc-18/SEC1 family. In terms of assembly, interacts with STX17. Interacts with STX5A. Interacts with the COG complex via COG4.

The protein resides in the cytoplasm. It localises to the endoplasmic reticulum membrane. It is found in the golgi apparatus. Its subcellular location is the golgi stack membrane. Functionally, plays a role in SNARE-pin assembly and Golgi-to-ER retrograde transport via its interaction with COG4. Involved in vesicular transport between the endoplasmic reticulum and the Golgi. In Mus musculus (Mouse), this protein is Sec1 family domain-containing protein 1 (Scfd1).